The sequence spans 276 residues: Adenylate kinase (276 aa).

50–55 contributes to the ATP binding site; it reads GAGKGT. The interval 70-99 is NMP; that stretch reads ATGDMLRSQVAKKTPLGREAKKIMDQGGLV. Residues threonine 71, arginine 76, 97-99, 126-129, and glutamine 133 each bind AMP; these read GLV and GFPR. Residues 167–204 form an LID region; that stretch reads GRLVHPASGRSYHTTFNPPKKAMTDDVTGEPLIQRSDD. Residues arginine 168 and 177 to 178 each bind ATP; that span reads SY. Arginine 201 and arginine 212 together coordinate AMP. Position 240 (glutamine 240) interacts with ATP.

It belongs to the adenylate kinase family. AK2 subfamily. In terms of assembly, monomer.

Its subcellular location is the cytoplasm. The protein localises to the cytosol. It localises to the mitochondrion intermembrane space. The catalysed reaction is AMP + ATP = 2 ADP. In terms of biological role, catalyzes the reversible transfer of the terminal phosphate group between ATP and AMP. Plays an important role in cellular energy homeostasis and in adenine nucleotide metabolism. Adenylate kinase activity is critical for regulation of the phosphate utilization and the AMP de novo biosynthesis pathways. The protein is Adenylate kinase of Pyricularia oryzae (strain 70-15 / ATCC MYA-4617 / FGSC 8958) (Rice blast fungus).